We begin with the raw amino-acid sequence, 489 residues long: 3-octaprenyl-4-hydroxybenzoate carboxy-lyase (489 aa).

Asparagine 172 serves as a coordination point for Mn(2+). Residues 175–177 (IYR), 189–191 (RWL), and 194–195 (RG) contribute to the prenylated FMN site. A Mn(2+)-binding site is contributed by glutamate 238. Aspartate 287 acts as the Proton donor in catalysis.

Belongs to the UbiD family. In terms of assembly, homohexamer. It depends on prenylated FMN as a cofactor. Requires Mn(2+) as cofactor.

The protein resides in the cell membrane. The catalysed reaction is a 4-hydroxy-3-(all-trans-polyprenyl)benzoate + H(+) = a 2-(all-trans-polyprenyl)phenol + CO2. It functions in the pathway cofactor biosynthesis; ubiquinone biosynthesis. Functionally, catalyzes the decarboxylation of 3-octaprenyl-4-hydroxy benzoate to 2-octaprenylphenol, an intermediate step in ubiquinone biosynthesis. The polypeptide is 3-octaprenyl-4-hydroxybenzoate carboxy-lyase (Salmonella paratyphi B (strain ATCC BAA-1250 / SPB7)).